A 473-amino-acid polypeptide reads, in one-letter code: H(+)/Cl(-) exchange transporter ClcA (473 aa).

Residues 1-32 (MKTDTPSLETPQAARLRRRQLIRQLLERDKTP) are Cytoplasmic-facing. Residues 33–69 (LAILFMAAVVGTLVGLAAVAFDKGVAWLQNQRMGALV) traverse the membrane as a helical segment. Topologically, residues 70–76 (HTADNYP) are periplasmic. The helical transmembrane segment at 77 to 100 (LLLTVAFLCSAVLAMFGYFLVRKY) threads the bilayer. A Selectivity filter part_1 motif is present at residues 106–110 (GSGIP). Residue S107 participates in chloride binding. The helical intramembrane region spans 109 to 116 (IPEIEGAL). The Cytoplasmic segment spans residues 117–123 (EDQRPVR). The next 2 membrane-spanning stretches (helical) occupy residues 124–141 (WWRVLPVKFFGGLGTLGG) and 148–166 (EGPTVQIGGNIGRMVLDIF). The Selectivity filter part_2 signature appears at 146–150 (GREGP). The Cytoplasmic portion of the chain corresponds to 167-176 (RLKGDEARHT). Intramembrane regions (helical) lie at residues 177–189 (LLATGAAAGLAAA) and 193–201 (PLAGILFII). The Cytoplasmic portion of the chain corresponds to 202 to 214 (EEMRPQFRYTLIS). Residues 215 to 232 (IKAVFIGVIMSTIMYRIF) traverse the membrane as a helical segment. The Periplasmic portion of the chain corresponds to 233 to 252 (NHEVALIDVGKLSDAPLNTQ). A helical transmembrane segment spans residues 253–281 (WLYLILGIIFGIFGPIFNKWVLGMQDLLH). Residues 282–287 (RVHGGN) are Cytoplasmic-facing. The chain crosses the membrane as a helical span at residues 288 to 309 (ITKWVLMGGAIGGLCGLLGFVA). The Periplasmic segment spans residues 310 to 329 (PATSGGGFNLIPIATAGNFS). A run of 2 helical transmembrane segments spans residues 330–349 (MGMLVFIFVARVITTLLCFS) and 355–376 (GIFAPMLALGTVLGTAFGMVVV). A Selectivity filter part_3 motif is present at residues 355–359 (GIFAP). Chloride is bound by residues I356 and F357. Residues 377–386 (ELFPQYHLEA) lie on the Periplasmic side of the membrane. Residues 387 to 401 (GTFAIAGMGALLAAS) constitute an intramembrane region (helical). Positions 402-404 (IRA) form an intramembrane region, note=Loop between two helices. Residues 405–416 (PLTGIILVLEMT) constitute an intramembrane region (helical). The segment at residues 417–421 (DNYQL) is an intramembrane region (note=Loop between two helices). Residues 422-438 (ILPMIITGLGATLLAQF) traverse the membrane as a helical segment. Residues 439–473 (TGGKPLYSAILARTLAKQEAEQLARSKAASASENT) are Cytoplasmic-facing. Y445 contributes to the chloride binding site.

Belongs to the chloride channel (TC 2.A.49) family. ClcA subfamily. Homodimer.

It is found in the cell inner membrane. The enzyme catalyses 2 chloride(in) + H(+)(out) = 2 chloride(out) + H(+)(in). Proton-coupled chloride transporter. Functions as antiport system and exchanges two chloride ions for 1 proton. Probably acts as an electrical shunt for an outwardly-directed proton pump that is linked to amino acid decarboxylation, as part of the extreme acid resistance (XAR) response. The polypeptide is H(+)/Cl(-) exchange transporter ClcA (Shigella boydii serotype 18 (strain CDC 3083-94 / BS512)).